The chain runs to 290 residues: 7-methylguanosine phosphate-specific 5'-nucleotidase A (290 aa).

The active-site Nucleophile is the aspartate 39. Mg(2+)-binding residues include aspartate 39 and aspartate 41. Catalysis depends on aspartate 41, which acts as the Proton donor. A CMP-binding site is contributed by glutamate 86. N(7)-methyl-GMP is bound at residue glutamate 86. Substrate is bound by residues 154–155 (SA) and lysine 203. Aspartate 228 contributes to the Mg(2+) binding site.

It belongs to the pyrimidine 5'-nucleotidase family. In terms of assembly, monomer.

It is found in the cytoplasm. It carries out the reaction N(7)-methyl-GMP + H2O = N(7)-methylguanosine + phosphate. The catalysed reaction is CMP + H2O = cytidine + phosphate. It catalyses the reaction a ribonucleoside 5'-phosphate + H2O = a ribonucleoside + phosphate. Its function is as follows. Specifically hydrolyzes 7-methylguanosine monophosphate (m(7)GMP) to 7-methylguanosine and inorganic phosphate. The specific activity for m(7)GMP may protect cells against undesired salvage of m(7)GMP and its incorporation into nucleic acids. Also has weak activity for CMP. UMP and purine nucleotides are poor substrates. In Xenopus laevis (African clawed frog), this protein is 7-methylguanosine phosphate-specific 5'-nucleotidase A (Nt5c3b-a).